The chain runs to 238 residues: NADH-quinone oxidoreductase subunit C (238 aa).

Residues 1 to 20 (MSSPDQNPSDAAGQTGSSNE) are disordered.

It belongs to the complex I 30 kDa subunit family. As to quaternary structure, NDH-1 is composed of 14 different subunits. Subunits NuoB, C, D, E, F, and G constitute the peripheral sector of the complex.

The protein resides in the cell membrane. It catalyses the reaction a quinone + NADH + 5 H(+)(in) = a quinol + NAD(+) + 4 H(+)(out). Its function is as follows. NDH-1 shuttles electrons from NADH, via FMN and iron-sulfur (Fe-S) centers, to quinones in the respiratory chain. The immediate electron acceptor for the enzyme in this species is believed to be a menaquinone. Couples the redox reaction to proton translocation (for every two electrons transferred, four hydrogen ions are translocated across the cytoplasmic membrane), and thus conserves the redox energy in a proton gradient. In Mycobacterium ulcerans (strain Agy99), this protein is NADH-quinone oxidoreductase subunit C.